The chain runs to 411 residues: S-adenosylmethionine synthase (411 aa).

His15 contributes to the ATP binding site. Asp17 provides a ligand contact to Mg(2+). Residue Glu43 participates in K(+) binding. Residues Glu56 and Gln99 each coordinate L-methionine. The interval 99–109 (QSQEIAQGVDT) is flexible loop. Residues 179-181 (DGK), Asp260, 266-267 (RK), Ala283, and Lys287 contribute to the ATP site. Asp260 is an L-methionine binding site. Lys291 contributes to the L-methionine binding site.

This sequence belongs to the AdoMet synthase family. Homotetramer; dimer of dimers. The cofactor is Mg(2+). Requires K(+) as cofactor.

The protein resides in the cytoplasm. It catalyses the reaction L-methionine + ATP + H2O = S-adenosyl-L-methionine + phosphate + diphosphate. It participates in amino-acid biosynthesis; S-adenosyl-L-methionine biosynthesis; S-adenosyl-L-methionine from L-methionine: step 1/1. In terms of biological role, catalyzes the formation of S-adenosylmethionine (AdoMet) from methionine and ATP. The overall synthetic reaction is composed of two sequential steps, AdoMet formation and the subsequent tripolyphosphate hydrolysis which occurs prior to release of AdoMet from the enzyme. The polypeptide is S-adenosylmethionine synthase (Corynebacterium jeikeium (strain K411)).